Here is a 147-residue protein sequence, read N- to C-terminus: Large ribosomal subunit protein uL23A (147 aa).

A compositionally biased stretch (low complexity) spans 1 to 10 (MAPSAPAKTA). Residues 1–29 (MAPSAPAKTAKALDAKKKVVKGKRTTHRR) are disordered. Positions 18–29 (KVVKGKRTTHRR) are enriched in basic residues.

Belongs to the universal ribosomal protein uL23 family.

In terms of biological role, this protein binds to a specific region on the 26S rRNA. The polypeptide is Large ribosomal subunit protein uL23A (Caenorhabditis elegans).